A 522-amino-acid polypeptide reads, in one-letter code: MNANVPSDANCRRIICDGEYATVRYVGNVPPTPGLWLGVEWDNHLRGKHNGTHEGTKYFTCSHPTGGSFIRLKKANFGVDFLAALRKRYGLKSEQNEELVIGKKTVELVGFESIQEEQSKLNKLKDVSLRECAVSNAGEKGQICHSCPNIMTADLSKNLFSSWESLAHISSQLENLTSLDLSENKLNPSSNPSSLATSFCNLKVLSLNRTGMKWNEILQCASMWPALEELHLVSNDISLLEQPVNNLQNLTILDISNNKIVDGNQLHTIAFLPRLKQVIVSNNIISSISFPDVDFGHTAMFISLTSLAVNGNNISEWCVINELHKLLHLESLNCHGNPLMDLDKNPETVRQLIIAKIENLKFLNKTEIFPTERRGAELDYRKMFGNEWLKAGGSQNEEFNKPSRDFLQDHPRYSALIKKYGAPDEGELKQQQPFALKNQLLTLTIQCPEKPDKKPIQKKLPDSMTVQKVKGLLYRLLKVPGSDLKLSYQSSKMEGKEIELENDLKPLQFYSVENGDCLLVRW.

A CAP-Gly domain is found at 27–71; it reads GNVPPTPGLWLGVEWDNHLRGKHNGTHEGTKYFTCSHPTGGSFIR. 7 LRR repeats span residues 149 to 170, 175 to 196, 201 to 222, 226 to 248, 249 to 270, 274 to 295, and 303 to 324; these read NIMTADLSKNLFSSWESLAHIS, NLTSLDLSENKLNPSSNPSSLA, NLKVLSLNRTGMKWNEILQCAS, ALEELHLVSNDISLLEQPVNNLQ, NLTILDISNNKIVDGNQLHTIA, RLKQVIVSNNIISSISFPDVDF, and SLTSLAVNGNNISEWCVINELH. The LRRCT domain occupies 337-379; that stretch reads NPLMDLDKNPETVRQLIIAKIENLKFLNKTEIFPTERRGAELD.

The protein belongs to the TBCE family. Supercomplex made of cofactors A to E. Cofactors A and D function by capturing and stabilizing tubulin in a quasi-native conformation. Cofactor E binds to the cofactor D-tubulin complex; interaction with cofactor C then causes the release of tubulin polypeptides that are committed to the native state.

It localises to the cytoplasm. The protein resides in the cytoskeleton. Functionally, tubulin-folding protein; involved in the second step of the tubulin folding pathway. This is Tubulin-specific chaperone E (tbce) from Xenopus laevis (African clawed frog).